Here is a 466-residue protein sequence, read N- to C-terminus: Asparagine--tRNA ligase (466 aa).

It belongs to the class-II aminoacyl-tRNA synthetase family. As to quaternary structure, homodimer.

The protein localises to the cytoplasm. The enzyme catalyses tRNA(Asn) + L-asparagine + ATP = L-asparaginyl-tRNA(Asn) + AMP + diphosphate + H(+). This is Asparagine--tRNA ligase from Xylella fastidiosa (strain 9a5c).